The following is a 446-amino-acid chain: MKNTNLTISIIGGTDGLGKWFARYLKNKGFNVIVTGRDIEKGKNVEKELGVEFTNNNIEAAKKGDIVIVAVPINVTERVIKEVAPHVREGCLLMDITSIKEIPSKAMEEHVKEGVTVIPTHPMFGPSTPSLLRQVVILTPSEKHKNTEWFNKVYNFLKKEGAKVIVIPPEKHDRIMGIVQGLTHFAFISLGATLKELNVDIKESRKFASPIYELMISIIGRIIGQNPYLYADIQMFNPRIKEIHETFINQCKEISEIVKNKDREGFVKIMKEAAKHFGSEAKRGAYYSDKAVFALTSEIEKLNKLIGKDVAVKNINSNVVHFGVLKDIEDDYLILNKNGKEQKFNILRVEVFAGDELSKLKKKHLEKKYIDVSVLFKKDVDEEVILNLLKKMFDIEIIDVYEGEKIEEGYKSITFRIYGYNKDELKNIEKEFLKIIKNIGGKERFK.

The 283-residue stretch at 6 to 288 (LTISIIGGTD…SEAKRGAYYS (283 aa)) folds into the Prephenate/arogenate dehydrogenase domain.

The protein in the N-terminal section; belongs to the prephenate/arogenate dehydrogenase family.

This chain is Probable arogenate/prephenate dehydrogenase, found in Methanocaldococcus jannaschii (strain ATCC 43067 / DSM 2661 / JAL-1 / JCM 10045 / NBRC 100440) (Methanococcus jannaschii).